A 418-amino-acid polypeptide reads, in one-letter code: Acyltransferase calJ (418 aa).

The Acyl-ester intermediate role is filled by Ser79. Positions 176 and 191 each coordinate substrate.

The protein belongs to the class-A beta-lactamase family.

Its pathway is secondary metabolite biosynthesis. Its function is as follows. Acyltransferase; part of the gene cluster that mediates the biosynthesis of calbistrin A and related compounds. Calbistrin A is a secondary metabolite with an interesting structure that was recently found to have bioactivity against leukemia cells. It consists of two polyketides linked by an ester bond: a bicyclic decalin containing polyketide and a linear 12 carbon dioic acid structure. The polyketide synthase calA is probably responsible for forming the decalin moiety. Because calA lacks a designated enoylreductase (ER) domain, the required activity is provided by the trans-enoyl reductase calK. Following release from the PKS, calF then probably catalyzes the oxidation and the subsequent Diels Alder cycloisomerization that lead to the formation of the decalin moiety. The decalin polyketide backbone includes two C-methyl groups, at C7 and C11 in backbone, of which the C7 position is probably methylated by the methyltransferase domain of calA. A candidate for adding the methyl group at C11, if not done by CalA, is the cluster methyltransferase calH. Several additional tailoring enzymes within the cluster could be involved in the modification of the decalin polyketide product. Those include the 3 cytochrome P450 monooxygenases CalE, CalG and CalL, of which one might be responsible for the introduction of the extra hydroxyl group attached to the backbone of the decalin moiety, at position C9 in the backbone, that allows for attachment of the linear moiety. One tailoring enzyme activity that is expected to be involved in biosynthesis of calbistrin is an acyltransferase for connecting the two polyketide synthase products, and which could be performed by the cluster acyltransferase calJ. The enzyme responsible for the biosynthesis of the linear moiety, probably a second PKS, has not been identified yet. The chain is Acyltransferase calJ from Penicillium decumbens.